Reading from the N-terminus, the 247-residue chain is Opacity protein opA52 (247 aa).

Ala1 is a signal peptide.

The protein belongs to the opacity porin family.

It is found in the cell outer membrane. Functionally, implicated in a number of adherence functions. OPA proteins are implicated in pathogenesis and are subject to phase variation. The polypeptide is Opacity protein opA52 (opaG) (Neisseria gonorrhoeae).